Reading from the N-terminus, the 733-residue chain is MSGSRQAGSGSAGTSPGSSAASSVTSASSSLSSSPSPPSVAASAATLVSGGVAPAAGSGGLGGPGRPVLVAAAVSGSASAGGAVSAGQSRLSCAARPSAGVGGSSSSLGSSSRKRPLLVPLCNGLLNSYEDKSNDFVCPICFDMIEEAYMTKCGHSFCYKCIHQSLEDNNRCPKCNYVVDNIDHLYPNFLVNELILKQKQRFEEKRFKLDHSVSSTNGHRWQIFQDLLGTDQDNLDLANVNLMLELLVQKKKQLEAESHAAQLQILMEFLKVARRNKREQLEQIQKELSVLEEDIKRVEEMSGLYSPVSEDSTVPQFEAPSPSHSSIIDSTEYSQPPGFSGTSQTKKQPWYNSTLASRRKRLTAHFEDLEQCYFSTRMSRISDDSRTASQLDEFQECLSKFTRYNSVRPLATLSYASDLYNGSSIVSSIEFDRDCDYFAIAGVTKKIKVYEYGTVIQDAVDIHYPENEMTCNSKISCISWSSYHKNLLASSDYEGTVILWDGFTGQRSKVYQEHEKRCWSVDFNLMDPKLLASGSDDAKVKLWSTNLDNSVASIEAKANVCCVKFSPSSRYHLAFGCADHCVHYYDLRNTKQPIMVFKGHRKAVSYAKFVSGEEIVSASTDSQLKLWNVGKPYCLRSFKGHINEKNFVGLASNGDYIACGSENNSLYLYYKGLSKTLLTFKFDTVKSVLDKDRKEDDTNEFVSAVCWRALSDGESNVLIAANSQGTIKVLELV.

Positions 1 to 43 are disordered; the sequence is MSGSRQAGSGSAGTSPGSSAASSVTSASSSLSSSPSPPSVAAS. The Nuclear localization signal 1 motif lies at 111-115; sequence SSRKR. Residues 138–176 form an RING-type zinc finger; the sequence is CPICFDMIEEAYMTKCGHSFCYKCIHQSLEDNNRCPKCN. Residues 197-208 carry the Nuclear localization signal 2 motif; it reads KQKQRFEEKRFK. Residues 231–306 are a coiled coil; it reads DQDNLDLANV…RVEEMSGLYS (76 aa). Residues 237 to 247 carry the Nuclear export signal motif; that stretch reads LANVNLMLELL. The interval 307–327 is disordered; that stretch reads PVSEDSTVPQFEAPSPSHSSI. WD repeat units lie at residues 421–460, 470–510, 513–553, 555–595, 599–637, 640–679, and 695–731; these read NGSS…QDAV, TCNS…RSKV, EHEK…SVAS, EAKA…QPIM, GHRK…CLRS, GHIN…TLLT, and EDDT…KVLE. The tract at residues 645–647 is interaction with TRIB1; it reads KNF.

The protein belongs to the COP1 family. Homodimer. Homodimerization is mediated by the coiled coil domain. Component of the DCX DET1-COP1 ubiquitin ligase complex at least composed of RBX1, DET1, DDB1, CUL4A and COP1. Isoform 2 does not interact with CUL4A but still binds to RBX1, suggesting that the interaction may be mediated by another cullin protein. Isoform 1 and isoform 2 interact with CUL5 but not with CUL1, CUL2 not CUL3. Interacts with bZIP transcription factors JUN, JUNB and JUND but not with FOS, ATF2 nor XBP1. Interacts with p53 (TP53). Interacts with COPS6; this interaction stabilizes RFWD2 through reducing its auto-ubiquitination and decelerating its turnover rate. Interacts with SFN; this interaction leads to SFN degradation. Interacts with p53/TP53 and MTA1. Interacts with TRIB1 (via C-terminus) and TRIB2.

It localises to the nucleus speckle. The protein resides in the cytoplasm. It catalyses the reaction S-ubiquitinyl-[E2 ubiquitin-conjugating enzyme]-L-cysteine + [acceptor protein]-L-lysine = [E2 ubiquitin-conjugating enzyme]-L-cysteine + N(6)-ubiquitinyl-[acceptor protein]-L-lysine.. The protein operates within protein modification; protein ubiquitination. Its activity is regulated as follows. TRIB1 competes with substrates for RFWD2 binding. Functionally, E3 ubiquitin-protein ligase that mediates ubiquitination and subsequent proteasomal degradation of target proteins. E3 ubiquitin ligases accept ubiquitin from an E2 ubiquitin-conjugating enzyme in the form of a thioester and then directly transfers the ubiquitin to targeted substrates. Involved in JUN ubiquitination and degradation. Directly involved in p53 (TP53) ubiquitination and degradation, thereby abolishing p53-dependent transcription and apoptosis. Ubiquitinates p53 independently of MDM2 or RCHY1. Probably mediates E3 ubiquitin ligase activity by functioning as the essential RING domain subunit of larger E3 complexes. In contrast, it does not constitute the catalytic RING subunit in the DCX DET1-COP1 complex that negatively regulates JUN, the ubiquitin ligase activity being mediated by RBX1. Involved in 14-3-3 protein sigma/SFN ubiquitination and proteasomal degradation, leading to AKT activation and promotion of cell survival. Ubiquitinates MTA1 leading to its proteasomal degradation. Upon binding to TRIB1, ubiquitinates CEBPA, which lacks a canonical COP1-binding motif. This is E3 ubiquitin-protein ligase COP1 from Mus musculus (Mouse).